The primary structure comprises 557 residues: Alpha-glucosidase (557 aa).

Asp201 acts as the Nucleophile in catalysis. Glu256 (proton donor) is an active-site residue.

The protein belongs to the glycosyl hydrolase 13 family.

The enzyme catalyses Hydrolysis of terminal, non-reducing (1-&gt;4)-linked alpha-D-glucose residues with release of alpha-D-glucose.. The chain is Alpha-glucosidase (agl) from Pediococcus pentosaceus.